We begin with the raw amino-acid sequence, 116 residues long: Iron-sulfur cluster insertion protein ErpA (116 aa).

Positions 44, 108, and 110 each coordinate iron-sulfur cluster.

The protein belongs to the HesB/IscA family. As to quaternary structure, homodimer. The cofactor is iron-sulfur cluster.

Required for insertion of 4Fe-4S clusters for at least IspG. This is Iron-sulfur cluster insertion protein ErpA from Pseudomonas fluorescens (strain Pf0-1).